We begin with the raw amino-acid sequence, 189 residues long: Putative 3-methyladenine DNA glycosylase (189 aa).

The protein belongs to the DNA glycosylase MPG family.

The sequence is that of Putative 3-methyladenine DNA glycosylase (mag) from Corynebacterium glutamicum (strain ATCC 13032 / DSM 20300 / JCM 1318 / BCRC 11384 / CCUG 27702 / LMG 3730 / NBRC 12168 / NCIMB 10025 / NRRL B-2784 / 534).